Here is a 190-residue protein sequence, read N- to C-terminus: Imidazoleglycerol-phosphate dehydratase (190 aa).

This sequence belongs to the imidazoleglycerol-phosphate dehydratase family.

The protein localises to the cytoplasm. The catalysed reaction is D-erythro-1-(imidazol-4-yl)glycerol 3-phosphate = 3-(imidazol-4-yl)-2-oxopropyl phosphate + H2O. The protein operates within amino-acid biosynthesis; L-histidine biosynthesis; L-histidine from 5-phospho-alpha-D-ribose 1-diphosphate: step 6/9. The protein is Imidazoleglycerol-phosphate dehydratase of Sulfurovum sp. (strain NBC37-1).